We begin with the raw amino-acid sequence, 341 residues long: RNA 3'-terminal phosphate cyclase (341 aa).

Residues Q100 and 283 to 287 (FLGDQ) contribute to the ATP site. The Tele-AMP-histidine intermediate role is filled by H307.

Belongs to the RNA 3'-terminal cyclase family. Type 1 subfamily.

It localises to the cytoplasm. The catalysed reaction is a 3'-end 3'-phospho-ribonucleotide-RNA + ATP = a 3'-end 2',3'-cyclophospho-ribonucleotide-RNA + AMP + diphosphate. Catalyzes the conversion of 3'-phosphate to a 2',3'-cyclic phosphodiester at the end of RNA. The mechanism of action of the enzyme occurs in 3 steps: (A) adenylation of the enzyme by ATP; (B) transfer of adenylate to an RNA-N3'P to produce RNA-N3'PP5'A; (C) and attack of the adjacent 2'-hydroxyl on the 3'-phosphorus in the diester linkage to produce the cyclic end product. The biological role of this enzyme is unknown but it is likely to function in some aspects of cellular RNA processing. The chain is RNA 3'-terminal phosphate cyclase (rtcA) from Pyrococcus horikoshii (strain ATCC 700860 / DSM 12428 / JCM 9974 / NBRC 100139 / OT-3).